The sequence spans 257 residues: Probable enoyl-CoA hydratase echA17 (257 aa).

It belongs to the enoyl-CoA hydratase/isomerase family.

The catalysed reaction is a (3S)-3-hydroxyacyl-CoA = a (2E)-enoyl-CoA + H2O. It carries out the reaction a 4-saturated-(3S)-3-hydroxyacyl-CoA = a (3E)-enoyl-CoA + H2O. Its function is as follows. Could possibly oxidize fatty acids using specific components. This Mycobacterium avium (strain 104) protein is Probable enoyl-CoA hydratase echA17 (echA17).